We begin with the raw amino-acid sequence, 343 residues long: Aspartate carbamoyltransferase catalytic subunit (343 aa).

R71 and T72 together coordinate carbamoyl phosphate. Residue K99 coordinates L-aspartate. Carbamoyl phosphate-binding residues include R121, H149, and Q152. Positions 195 and 249 each coordinate L-aspartate. Residues G290 and P291 each coordinate carbamoyl phosphate.

Belongs to the aspartate/ornithine carbamoyltransferase superfamily. ATCase family. As to quaternary structure, heterododecamer (2C3:3R2) of six catalytic PyrB chains organized as two trimers (C3), and six regulatory PyrI chains organized as three dimers (R2).

It catalyses the reaction carbamoyl phosphate + L-aspartate = N-carbamoyl-L-aspartate + phosphate + H(+). Its pathway is pyrimidine metabolism; UMP biosynthesis via de novo pathway; (S)-dihydroorotate from bicarbonate: step 2/3. Its function is as follows. Catalyzes the condensation of carbamoyl phosphate and aspartate to form carbamoyl aspartate and inorganic phosphate, the committed step in the de novo pyrimidine nucleotide biosynthesis pathway. In Rhodopirellula baltica (strain DSM 10527 / NCIMB 13988 / SH1), this protein is Aspartate carbamoyltransferase catalytic subunit.